The chain runs to 453 residues: Serine/threonine-protein phosphatase 2A 55 kDa regulatory subunit B delta isoform (453 aa).

WD repeat units lie at residues 32–71, 97–138, 181–219, and 230–270; these read AEAD…KGRA, EIEE…KRAE, AHTY…RSFN, and ELTE…LCDR. Ser-285 carries the phosphoserine modification. WD repeat units lie at residues 289–327, 344–385, and 420–452; these read EIIS…RPVE, ENDC…DVTL, and DFNK…QDKI. Tyr-305 carries the phosphotyrosine modification. Phosphothreonine is present on Thr-308. The tract at residues 385–406 is disordered; the sequence is LEASRENSKPRASLKPRKVCSG.

The protein belongs to the phosphatase 2A regulatory subunit B family. As to quaternary structure, PP2A consists of a common heterodimeric core enzyme, composed of a 36 kDa catalytic subunit (subunit C) and a 65 kDa constant regulatory subunit (PR65 or subunit A), that associates with a variety of regulatory subunits. Proteins that associate with the core dimer include three families of regulatory subunits B (the R2/B/PR55/B55, R3/B''/PR72/PR130/PR59 and R5/B'/B56 families), the 48 kDa variable regulatory subunit, viral proteins, and cell signaling molecules. Interacts with ENSA (when phosphorylated at 'Ser-67') and ARPP19 (when phosphorylated at 'Ser-62'), leading to inhibit PP2A activity. Interacts with IER5. As to expression, widely expressed with high levels in brain, heart, placenta, skeletal muscle, testis, thymus and spleen.

The protein resides in the cytoplasm. Substrate-recognition subunit of protein phosphatase 2A (PP2A) that plays a key role in cell cycle by controlling mitosis entry and exit. Involved in chromosome clustering during late mitosis by mediating dephosphorylation of MKI67. The activity of PP2A complexes containing PPP2R2D (PR55-delta) fluctuate during the cell cycle: the activity is high in interphase and low in mitosis. In Rattus norvegicus (Rat), this protein is Serine/threonine-protein phosphatase 2A 55 kDa regulatory subunit B delta isoform (Ppp2r2d).